Reading from the N-terminus, the 104-residue chain is NADH-quinone oxidoreductase subunit K (104 aa).

Transmembrane regions (helical) follow at residues 7–27, 31–51, and 63–83; these read PDMA…GVLV, LLFM…AFVA, and VMFL…LAIL.

Belongs to the complex I subunit 4L family. NDH-1 is composed of 14 different subunits. Subunits NuoA, H, J, K, L, M, N constitute the membrane sector of the complex.

It is found in the cell inner membrane. It catalyses the reaction a quinone + NADH + 5 H(+)(in) = a quinol + NAD(+) + 4 H(+)(out). Its function is as follows. NDH-1 shuttles electrons from NADH, via FMN and iron-sulfur (Fe-S) centers, to quinones in the respiratory chain. The immediate electron acceptor for the enzyme in this species is believed to be ubiquinone. Couples the redox reaction to proton translocation (for every two electrons transferred, four hydrogen ions are translocated across the cytoplasmic membrane), and thus conserves the redox energy in a proton gradient. This chain is NADH-quinone oxidoreductase subunit K, found in Gluconacetobacter diazotrophicus (strain ATCC 49037 / DSM 5601 / CCUG 37298 / CIP 103539 / LMG 7603 / PAl5).